Reading from the N-terminus, the 382-residue chain is F-box/kelch-repeat protein KIB1 (382 aa).

The F-box domain occupies 22 to 69 (SKHSILAVDLVRLILERLSFVDFHRARCVSSIWYIASKTVIGVTNPTT). 3 Kelch repeats span residues 73–117 (ILFP…ASSG), 159–209 (VLWV…FKEN), and 259–306 (IVAK…ITVE).

Part of a SCF (SKP1-cullin-F-box) protein ligase complex. Binds directly to several GSK3 family proteins such as SKP1A/ASK1, ASK1/SK11, ASK3/SK12, ASK5/SK13, ASK7/BIN2/SK21, ASK9/SK22 and ASK6/SK23. Interacts with ASK7/BIN2/SK21 in a brassinosteroid (BR)-dependent manner. Expressed in seedlings, leaves, stems, flower buds and flowers.

Its subcellular location is the cytoplasm. The protein localises to the nucleus. It is found in the nucleolus. Its function is as follows. Component of SCF(ASK-cullin-F-box) E3 ubiquitin ligase complexes, which may mediate the ubiquitination and subsequent proteasomal degradation of target proteins. Required for brassinosteroid (BR) signal transduction. Mediates ASK7/BIN2/SK21 inactivation both by competing with substrate binding (e.g. BZR1) and by promoting its ubiquitination and subsequent proteasomal degradation. This chain is F-box/kelch-repeat protein KIB1, found in Arabidopsis thaliana (Mouse-ear cress).